The following is a 668-amino-acid chain: Tyrosine-protein phosphatase non-receptor type ptp-2 (668 aa).

SH2 domains lie at Asn-10–Val-113 and Trp-134–Leu-232. The 317-residue stretch at Ile-264 to Tyr-580 folds into the Tyrosine-protein phosphatase domain. Cys-518 functions as the Phosphocysteine intermediate in the catalytic mechanism. The tract at residues Pro-603–Lys-668 is disordered. Composition is skewed to low complexity over residues Ser-616 to Thr-634 and Ser-652 to Lys-668.

The protein belongs to the protein-tyrosine phosphatase family. Non-receptor class 2 subfamily. Expressed in embryonic cells, developing vulva, body wall muscles, head neurons and gonadal sheath cells.

Its subcellular location is the cytoplasm. The enzyme catalyses O-phospho-L-tyrosyl-[protein] + H2O = L-tyrosyl-[protein] + phosphate. Involved in embryonic and larval development. Plays a role in oogenesis by regulating mpk-1 phosphorylation and oocyte maturation in response to major sperm protein (MSP). During the formation of neuromuscular junctions at the larval stage, negatively regulates membrane protrusion from body wall muscles probably downstream of receptor egl-15. Plays a role in fluid homeostasis probably downstream of receptor egl-15 and adapter soc-1. Promotes vulva induction and negatively regulates fertility probably downstream of receptor let-23. Negatively regulates daf-2-mediated repression of dauer formation. In Caenorhabditis elegans, this protein is Tyrosine-protein phosphatase non-receptor type ptp-2.